The chain runs to 321 residues: Aspartate carbamoyltransferase catalytic subunit (321 aa).

Carbamoyl phosphate-binding residues include Arg-64 and Thr-65. Lys-92 contributes to the L-aspartate binding site. The carbamoyl phosphate site is built by Arg-114, His-144, and Gln-147. Arg-177 and Arg-232 together coordinate L-aspartate. 2 residues coordinate carbamoyl phosphate: Gly-273 and Pro-274.

Belongs to the aspartate/ornithine carbamoyltransferase superfamily. ATCase family. In terms of assembly, heterododecamer (2C3:3R2) of six catalytic PyrB chains organized as two trimers (C3), and six regulatory PyrI chains organized as three dimers (R2).

It carries out the reaction carbamoyl phosphate + L-aspartate = N-carbamoyl-L-aspartate + phosphate + H(+). The protein operates within pyrimidine metabolism; UMP biosynthesis via de novo pathway; (S)-dihydroorotate from bicarbonate: step 2/3. Functionally, catalyzes the condensation of carbamoyl phosphate and aspartate to form carbamoyl aspartate and inorganic phosphate, the committed step in the de novo pyrimidine nucleotide biosynthesis pathway. This Alkalilimnicola ehrlichii (strain ATCC BAA-1101 / DSM 17681 / MLHE-1) protein is Aspartate carbamoyltransferase catalytic subunit.